Here is a 460-residue protein sequence, read N- to C-terminus: GTPase Der (460 aa).

2 consecutive EngA-type G domains span residues 21-187 and 198-373; these read PRVV…FSVD and VRLA…AQLN. GTP-binding positions include 27 to 34, 74 to 78, 141 to 144, 204 to 211, 251 to 255, and 316 to 319; these read GRPNVGKS, DTSGF, NKTE, GKPNTGKS, DTAGI, and NKWD. One can recognise a KH-like domain in the interval 374-457; that stretch reads TKVETSALNT…PVKLTIRKNC (84 aa).

The protein belongs to the TRAFAC class TrmE-Era-EngA-EngB-Septin-like GTPase superfamily. EngA (Der) GTPase family. Associates with the 50S ribosomal subunit.

In terms of biological role, GTPase that plays an essential role in the late steps of ribosome biogenesis. In Treponema pallidum subsp. pallidum (strain SS14), this protein is GTPase Der.